A 529-amino-acid chain; its full sequence is Peptide chain release factor 3 (529 aa).

A tr-type G domain is found at 11-280 (AKRRTFAIIS…GLVAWAPAPM (270 aa)). Residues 20–27 (SHPDAGKT), 88–92 (DTPGH), and 142–145 (NKLD) contribute to the GTP site.

It belongs to the TRAFAC class translation factor GTPase superfamily. Classic translation factor GTPase family. PrfC subfamily.

It localises to the cytoplasm. In terms of biological role, increases the formation of ribosomal termination complexes and stimulates activities of RF-1 and RF-2. It binds guanine nucleotides and has strong preference for UGA stop codons. It may interact directly with the ribosome. The stimulation of RF-1 and RF-2 is significantly reduced by GTP and GDP, but not by GMP. The chain is Peptide chain release factor 3 from Edwardsiella ictaluri (strain 93-146).